A 243-amino-acid chain; its full sequence is Zinc import ATP-binding protein ZnuC (243 aa).

The region spanning 25-242 (LVVDSITLFY…AKFMSVFPEN (218 aa)) is the ABC transporter domain. 57–64 (GPNGGGKT) is a binding site for ATP.

This sequence belongs to the ABC transporter superfamily. Zinc importer (TC 3.A.1.15.5) family. In terms of assembly, the complex is composed of two ATP-binding proteins (ZnuC), two transmembrane proteins (ZnuB) and a solute-binding protein (ZnuA).

It localises to the cell inner membrane. It catalyses the reaction Zn(2+)(out) + ATP(in) + H2O(in) = Zn(2+)(in) + ADP(in) + phosphate(in) + H(+)(in). Part of the ABC transporter complex ZnuABC involved in zinc import. Responsible for energy coupling to the transport system. The polypeptide is Zinc import ATP-binding protein ZnuC (Anaplasma phagocytophilum (strain HZ)).